Reading from the N-terminus, the 378-residue chain is Mitogen-activated protein kinase mpkC (378 aa).

Residues 20 to 300 (YVNPQPIGMG…AQDALRHPYL (281 aa)) enclose the Protein kinase domain. ATP contacts are provided by residues 26–34 (IGMGSFGLV) and K49. D141 serves as the catalytic Proton acceptor.

This sequence belongs to the protein kinase superfamily. Ser/Thr protein kinase family. MAP kinase subfamily. Requires Mg(2+) as cofactor.

The protein localises to the nucleus. The enzyme catalyses L-seryl-[protein] + ATP = O-phospho-L-seryl-[protein] + ADP + H(+). The catalysed reaction is L-threonyl-[protein] + ATP = O-phospho-L-threonyl-[protein] + ADP + H(+). Its activity is regulated as follows. Activated by threonine and tyrosine phosphorylation. In terms of biological role, mitogen-activated protein kinase (MAPK), part of the high-osmolarity glycerol (HOG) pathway. With sakA, plays a role in the osmotic and oxidative stress responses. Involved in paradoxical growth, the cell wall integrity (CWI) pathway and biofilm formation. SakA and mpkC collaborate during virulence and mpkC could act by modulating sakA activity upon exposure to several types of stresses and during cell wall biosynthesis. This chain is Mitogen-activated protein kinase mpkC, found in Aspergillus fumigatus (strain CBS 144.89 / FGSC A1163 / CEA10) (Neosartorya fumigata).